The primary structure comprises 462 residues: UDP-N-acetylmuramoylalanine--D-glutamate ligase (462 aa).

117–123 (GTNGKTT) is an ATP binding site.

The protein belongs to the MurCDEF family.

The protein localises to the cytoplasm. It carries out the reaction UDP-N-acetyl-alpha-D-muramoyl-L-alanine + D-glutamate + ATP = UDP-N-acetyl-alpha-D-muramoyl-L-alanyl-D-glutamate + ADP + phosphate + H(+). The protein operates within cell wall biogenesis; peptidoglycan biosynthesis. Functionally, cell wall formation. Catalyzes the addition of glutamate to the nucleotide precursor UDP-N-acetylmuramoyl-L-alanine (UMA). The chain is UDP-N-acetylmuramoylalanine--D-glutamate ligase from Synechococcus sp. (strain CC9902).